Consider the following 428-residue polypeptide: uncharacterized protein (428 aa).

The Glutaredoxin domain maps to 241–351; the sequence is KEEEEQSVGK…KLLGGCERVE (111 aa). The segment covering 386–401 has biased composition (acidic residues); that stretch reads EDDDDDDDEGDDDESV. A disordered region spans residues 386-405; it reads EDDDDDDDEGDDDESVKEER.

This is an uncharacterized protein from Arabidopsis thaliana (Mouse-ear cress).